Reading from the N-terminus, the 147-residue chain is uncharacterized protein (147 aa).

The disordered stretch occupies residues 51-72; it reads VTSSMSVMNDSEECPLINGPSM.

This is an uncharacterized protein from Gallid herpesvirus 2 (strain GA) (GaHV-2).